The primary structure comprises 498 residues: Lysine--tRNA ligase (498 aa).

Mg(2+) is bound by residues glutamate 407 and glutamate 414.

It belongs to the class-II aminoacyl-tRNA synthetase family. Homodimer. Mg(2+) serves as cofactor.

The protein localises to the cytoplasm. The enzyme catalyses tRNA(Lys) + L-lysine + ATP = L-lysyl-tRNA(Lys) + AMP + diphosphate. In Sinorhizobium medicae (strain WSM419) (Ensifer medicae), this protein is Lysine--tRNA ligase.